The following is a 595-amino-acid chain: Trafficking protein particle complex subunit 14 (595 aa).

Disordered regions lie at residues 84-111 (ASVS…ECVE) and 494-513 (SNPP…SSPA).

Component of the multisubunit TRAPP II complex, which includes at least TRAPPC1, TRAPPC2, TRAPPC2L, TRAPPC3, TRAPPC4, TRAPPC5, TRAPPC6A/B, TRAPPC9, TRAPPC10 and TRAPPC14. TRAPPC9, TRAPPC10 and TRAPPC14 are specific subunits of the TRAPP II complex. Interacts with alpha-tubulin during mitosis.

The protein resides in the cytoplasm. The protein localises to the cytoskeleton. Its subcellular location is the spindle. It is found in the vesicle. It localises to the midbody. Functionally, specific subunit of the TRAPP (transport protein particle) II complex, a highly conserved vesicle tethering complex that functions in late Golgi trafficking as a membrane tether. TRAPP II complex also has GEF activity toward RAB1A. TRAPPC14 is required for ciliogenesis. The polypeptide is Trafficking protein particle complex subunit 14 (trappc14) (Danio rerio (Zebrafish)).